The chain runs to 338 residues: Glyceraldehyde-3-phosphate dehydrogenase (338 aa).

NAD(+)-binding positions include Arg-12–Ile-13, Asp-34, and Arg-79. D-glyceraldehyde 3-phosphate contacts are provided by residues Ser-150–Thr-152, Thr-181, Thr-210–Gly-211, and Arg-233. The active-site Nucleophile is Cys-151. NAD(+) is bound at residue Asn-315.

Belongs to the glyceraldehyde-3-phosphate dehydrogenase family. As to quaternary structure, homotetramer.

The protein localises to the cytoplasm. The enzyme catalyses D-glyceraldehyde 3-phosphate + phosphate + NAD(+) = (2R)-3-phospho-glyceroyl phosphate + NADH + H(+). Its pathway is carbohydrate degradation; glycolysis; pyruvate from D-glyceraldehyde 3-phosphate: step 1/5. In Neurospora crassa (strain ATCC 24698 / 74-OR23-1A / CBS 708.71 / DSM 1257 / FGSC 987), this protein is Glyceraldehyde-3-phosphate dehydrogenase (gpd-1).